Here is a 539-residue protein sequence, read N- to C-terminus: Phosphoenolpyruvate carboxykinase (ATP) (539 aa).

Substrate-binding residues include Arg64, Tyr206, and Lys212. Residues Lys212, His231, and 247 to 255 (GLSGTGKTT) each bind ATP. Residues Lys212 and His231 each coordinate Mn(2+). Asp268 contributes to the Mn(2+) binding site. Residues Glu296, Arg332, 448–449 (RI), and Thr454 contribute to the ATP site. Substrate is bound at residue Arg332.

Belongs to the phosphoenolpyruvate carboxykinase (ATP) family. As to quaternary structure, monomer. It depends on Mn(2+) as a cofactor.

The protein localises to the cytoplasm. It catalyses the reaction oxaloacetate + ATP = phosphoenolpyruvate + ADP + CO2. Its pathway is carbohydrate biosynthesis; gluconeogenesis. Its function is as follows. Involved in the gluconeogenesis. Catalyzes the conversion of oxaloacetate (OAA) to phosphoenolpyruvate (PEP) through direct phosphoryl transfer between the nucleoside triphosphate and OAA. The protein is Phosphoenolpyruvate carboxykinase (ATP) of Salmonella choleraesuis (strain SC-B67).